The sequence spans 105 residues: Large ribosomal subunit protein uL24 (105 aa).

This sequence belongs to the universal ribosomal protein uL24 family. Part of the 50S ribosomal subunit.

In terms of biological role, one of two assembly initiator proteins, it binds directly to the 5'-end of the 23S rRNA, where it nucleates assembly of the 50S subunit. Its function is as follows. One of the proteins that surrounds the polypeptide exit tunnel on the outside of the subunit. The chain is Large ribosomal subunit protein uL24 from Francisella philomiragia subsp. philomiragia (strain ATCC 25017 / CCUG 19701 / FSC 153 / O#319-036).